A 592-amino-acid chain; its full sequence is MASEIHMTGPMCLIESTNGRLMANPEALKILSAITQPMVVVAIVGLYRTGKSYLMNKLAGKKKGFSLGSTVQSHTKGIWMWCVPHPKKPGHILVLLDTEGLGDVEKGDNQNDSWIFALAVLLSSTFVYNSIGTINQQAMDQLYYVTELTHRIRSKSSPDENENEVEDSADFVSFFPDFVWTLRDFSLDLEADGQPLTPDEYLTYSLKLKKGTSQKDETFNLPRLCIRKFFPKKKCFVFDRPVHRRKLAQLEKLQDEELDPEFVQQVADFCSYIFSNSKTKTLSGGIQVNGPRLESLVLTYVNAISSGDLPCMENAVLALAQIENSAAVQKAIAHYEQQMGQKVQLPTESLQELLDLHRDSEREAIEVFIRSSFKDVDHLFQKELAAQLEKKRDDFCKQNQEASSDRCSGLLQVIFSPLEEEVKAGIYSKPGGYRLFVQKLQDLKKKYYEEPRKGIQAEEILQTYLKSKESMTDAILQTDQTLTEKEKEIEVERVKAESAQASAKMLQEMQRKNEQMMEQKERSYQEHLKQLTEKMENDRVQLLKEQERTLALKLQEQEQLLKEGFQKESRIMKNEIQDLQTKMRRRKACTIS.

A GTPase domain (Globular) region spans residues 1–311 (MASEIHMTGP…NAISSGDLPC (311 aa)). The region spanning 35-278 (TQPMVVVAIV…FCSYIFSNSK (244 aa)) is the GB1/RHD3-type G domain. Residues 45–52 (GLYRTGKS), 67–69 (LGS), and 97–101 (DTEGL) contribute to the GTP site. At serine 156 the chain carries Phosphoserine. Cysteine 589 carries the post-translational modification Cysteine methyl ester. The S-farnesyl cysteine moiety is linked to residue cysteine 589. Threonine 590 carries the phosphothreonine modification. Residues 590-592 (TIS) constitute a propeptide, removed in mature form.

Belongs to the TRAFAC class dynamin-like GTPase superfamily. GB1/RHD3 GTPase family. GB1 subfamily. Homodimer; homodimerization occurs upon GTP-binding and is required for the second hydrolysis step from GDP to GMP. Undergoes conformational changes and oligomerization upon GTP-binding and hydrolysis. Heterodimer with other family members, including GBP2, GBP3, GBP4 and GBP5. Dimerization regulates subcellular location to membranous structures. Interacts with SQSTM1. Interacts (when phosphorylated) with 14-3-3 protein sigma (SFN); leading to GBP1 retention in the cytosol and inactivation. In terms of processing, isoprenylation is required for proper subcellular location. Post-translationally, phosphorylated at Ser-156 by PIM1 in absence of infection, inhibits GBP1: phosphorylation promotes interaction with 14-3-3 protein sigma (SFN), leading to GBP1 retention in the cytosol. Dephosphorylated in response to infection, liberating GBP1.

Its subcellular location is the cytoplasmic vesicle membrane. It localises to the golgi apparatus membrane. The protein localises to the cell membrane. The protein resides in the cytoplasm. It is found in the cytosol. Its subcellular location is the secreted. It catalyses the reaction GTP + H2O = GDP + phosphate + H(+). The enzyme catalyses GDP + H2O = GMP + phosphate + H(+). Its function is as follows. Interferon (IFN)-inducible GTPase that plays important roles in innate immunity against a diverse range of bacterial, viral and protozoan pathogens. Hydrolyzes GTP to GMP in two consecutive cleavage reactions: GTP is first hydrolyzed to GDP and then to GMP in a processive manner. Following infection, recruited to the pathogen-containing vacuoles or vacuole-escaped bacteria and promotes both inflammasome assembly and autophagy. Acts as a positive regulator of inflammasome assembly by facilitating the detection of inflammasome ligands from pathogens. Involved in the lysis of pathogen-containing vacuoles, releasing pathogens into the cytosol. Following pathogen release in the cytosol, forms a protein coat in a GTPase-dependent manner that encapsulates pathogens and promotes the detection of ligands by pattern recognition receptors. Plays a key role in inflammasome assembly in response to infection by Gram-negative bacteria: following pathogen release in the cytosol, forms a protein coat that encapsulates Gram-negative bacteria and directly binds to lipopolysaccharide (LPS), disrupting the O-antigen barrier and unmasking lipid A that is that detected by the non-canonical inflammasome effector CASP4/CASP11. Also promotes recruitment of proteins that mediate bacterial cytolysis, leading to release double-stranded DNA (dsDNA) that activates the AIM2 inflammasome. Involved in autophagy by regulating bacteriolytic peptide generation via its interaction with ubiquitin-binding protein SQSTM1, which delivers monoubiquitinated proteins to autolysosomes for the generation of bacteriolytic peptides. Confers protection to several pathogens, including the bacterial pathogens L.monocytogenes and M.bovis BCG as well as the protozoan pathogen T.gondii. Exhibits antiviral activity against influenza virus. In Pongo abelii (Sumatran orangutan), this protein is Guanylate-binding protein 1 (GBP1).